Here is a 192-residue protein sequence, read N- to C-terminus: Thymidylate kinase (192 aa).

7-14 serves as a coordination point for ATP; that stretch reads GIDCVGKS.

This sequence belongs to the thymidylate kinase family.

It catalyses the reaction dTMP + ATP = dTDP + ADP. Functionally, phosphorylation of dTMP to form dTDP in both de novo and salvage pathways of dTTP synthesis. This Campylobacter jejuni subsp. doylei (strain ATCC BAA-1458 / RM4099 / 269.97) protein is Thymidylate kinase.